Consider the following 145-residue polypeptide: D-aminoacyl-tRNA deacylase (145 aa).

The Gly-cisPro motif, important for rejection of L-amino acids signature appears at Gly137–Pro138.

The protein belongs to the DTD family. In terms of assembly, homodimer.

It is found in the cytoplasm. The catalysed reaction is glycyl-tRNA(Ala) + H2O = tRNA(Ala) + glycine + H(+). It carries out the reaction a D-aminoacyl-tRNA + H2O = a tRNA + a D-alpha-amino acid + H(+). Functionally, an aminoacyl-tRNA editing enzyme that deacylates mischarged D-aminoacyl-tRNAs. Also deacylates mischarged glycyl-tRNA(Ala), protecting cells against glycine mischarging by AlaRS. Acts via tRNA-based rather than protein-based catalysis; rejects L-amino acids rather than detecting D-amino acids in the active site. By recycling D-aminoacyl-tRNA to D-amino acids and free tRNA molecules, this enzyme counteracts the toxicity associated with the formation of D-aminoacyl-tRNA entities in vivo and helps enforce protein L-homochirality. In Cereibacter sphaeroides (strain KD131 / KCTC 12085) (Rhodobacter sphaeroides), this protein is D-aminoacyl-tRNA deacylase.